A 341-amino-acid chain; its full sequence is Tryptophan--tRNA ligase (341 aa).

Residues 11 to 13 (RPT) and 19 to 20 (GH) contribute to the ATP site. A 'HIGH' region motif is present at residues 12 to 20 (PTGKLHIGH). Residue aspartate 140 coordinates L-tryptophan. ATP contacts are provided by residues 152 to 154 (GED), leucine 193, and 201 to 205 (KMSKS). The 'KMSKS' region signature appears at 201–205 (KMSKS).

It belongs to the class-I aminoacyl-tRNA synthetase family. As to quaternary structure, homodimer.

Its subcellular location is the cytoplasm. It carries out the reaction tRNA(Trp) + L-tryptophan + ATP = L-tryptophyl-tRNA(Trp) + AMP + diphosphate + H(+). In terms of biological role, catalyzes the attachment of tryptophan to tRNA(Trp). This Clostridium longisporum protein is Tryptophan--tRNA ligase.